Consider the following 500-residue polypeptide: Cobyric acid synthase (500 aa).

A GATase cobBQ-type domain is found at 251–449; that stretch reads KLNIVIPIMP…LHGVFDHPDA (199 aa). The active-site Nucleophile is Cys-332. Residue His-441 is part of the active site.

It belongs to the CobB/CobQ family. CobQ subfamily.

It functions in the pathway cofactor biosynthesis; adenosylcobalamin biosynthesis. Its function is as follows. Catalyzes amidations at positions B, D, E, and G on adenosylcobyrinic A,C-diamide. NH(2) groups are provided by glutamine, and one molecule of ATP is hydrogenolyzed for each amidation. The chain is Cobyric acid synthase from Marinomonas sp. (strain MWYL1).